We begin with the raw amino-acid sequence, 394 residues long: RAB6A-GEF complex partner protein 2 (394 aa).

The protein belongs to the RGP1 family. In terms of assembly, forms a complex with RIC1; the interaction enhances RAB6A GTPase activity. Interacts with RIC1. Interacts with RAB6A; the interaction is direct with a preference for RAB6A-GDP. Interacts with RAB33B.

Its subcellular location is the cytoplasm. The protein localises to the cytosol. The protein resides in the membrane. In terms of biological role, the RIC1-RGP1 complex acts as a guanine nucleotide exchange factor (GEF), which activates RAB6A by exchanging bound GDP for free GTP and may thereby required for efficient fusion of endosome-derived vesicles with the Golgi compartment. The RIC1-RGP1 complex participates in the recycling of mannose-6-phosphate receptors. The chain is RAB6A-GEF complex partner protein 2 from Bos taurus (Bovine).